The following is a 60-amino-acid chain: MAVQQNKKSPSKRGMHRAHNALVVPGIAVESTTGETHLRHHISPNGFYRGRQVLKTKSEA.

Residues 1-21 (MAVQQNKKSPSKRGMHRAHNA) form a disordered region. Residues 9-19 (SPSKRGMHRAH) are compositionally biased toward basic residues.

The protein belongs to the bacterial ribosomal protein bL32 family.

This chain is Large ribosomal subunit protein bL32, found in Albidiferax ferrireducens (strain ATCC BAA-621 / DSM 15236 / T118) (Rhodoferax ferrireducens).